The following is a 345-amino-acid chain: MSQRIFLPDTLANWQWPRHLNPHYAEVKKASAAWAKSFRAFQTKAQEAFDRCDFNLLASFAYPLADEARLRSGCDLMNLFFVIDEYSDVATEEEVRAQKDIVMDAIRNTEKPRPAGEWIGGEVSRQFWDLAKKTASTQAQKRFIDTFDEYLESVVQQAADRNNSHVRGIESYLEVRRNTIGAKPSFALLEFDMQLPDEVINHPVIKELENSCIDMLCLGNDVVSYNLEQARDDDGHNIVTIAMNELRTDVAGAMIWVDEYHKQLESRFMENFKKVPRWGGPIDLQVARYCDGLGNWVRANDQWSFESERYFGKKGPEIIQRRWITLMPKMVSEELGPQIVDGSHL.

Residues D84, N220, S224, and E228 each contribute to the Mg(2+) site. A DDXXD motif motif is present at residues D84–D88. Positions 309 and 310 each coordinate (2E,6E)-farnesyl diphosphate.

Belongs to the terpene synthase family. In terms of assembly, monomer. Mg(2+) is required as a cofactor.

The enzyme catalyses (2E,6E)-farnesyl diphosphate = Delta(6)-protoilludene + diphosphate. It participates in secondary metabolite biosynthesis. In terms of biological role, delta(6)-protoilludene synthase, part of the gene cluster that mediates the biosynthesis of melleolides, a range of antifungal and phytotoxic polyketide derivatives composed of an orsellinic acid (OA) moiety esterified to various sesquiterpene alcohols. The first step in melleolides biosynthesis is performed by the delta(6)-protoilludene synthase PRO1 which catalyzes the cyclization of farnesyl diphosphate to protoilludene. The orsellinic acid synthase armB produces OA by condensing acetyl-CoA with 3 malonyl-CoA units in a three-round chain elongation reaction folowed by a C2-C7 ring closure. ArmB further catalyzes the trans-esterification of OA to the various sesquiterpene alcohols resulting from the hydroxylation of protoilludene. The melleolides cluster also includes 5 cytochrome P450 monooxygenases, 4 NAD(+)-dependent oxidoreductases, one flavin-dependent oxidoreductase, and one O-methyltransferase. The cytochrome P450 monooxygenases may be involved in protoilludene hydroxylation to elaborate melleolides with multiple alcohol groups, such as melleolide D, which carries alcohol functionalities at C-4, C-5, C-10, and C-13. The role of the NAD(+)-dependent enzymes remains unknown. Numerous melleolides, including arnamial, show 5'-O-methylation of the aromatic moiety which may be catalyzed by the methyltransferase encoded in the cluster. The flavin-dependent oxidoreductase might represent the dehydrogenase yielding the aldehyde in position 1 of arnamial and other melleolides. Finally, several halogenases, localized outside of the cluster, are able to catalyze the transfer of a single chlorine atom to the melleolide backbone, resulting in a 6'-chloromelleolide product. This Armillaria gallica (Bulbous honey fungus) protein is Delta(6)-protoilludene synthase.